The sequence spans 641 residues: Leucine-rich repeat receptor-like serine/threonine/tyrosine-protein kinase SOBIR1 (641 aa).

Residues 1-31 (MAVPTGSANLFLRPLILAVLSFLLLSSFVSS) form the signal peptide. Residues 32–284 (VEWLDIDSSD…KKKKSKKKKV (253 aa)) lie on the Extracellular side of the membrane. LRR repeat units lie at residues 112-133 (ELKE…DILS), 136-159 (QLEV…SSLS), 160-182 (RLRI…KNLR), 183-205 (NLEN…IVSF), and 207-228 (NLRF…VMSS). N-linked (GlcNAc...) asparagine glycosylation is present at Asn-154. Residue Asn-186 is glycosylated (N-linked (GlcNAc...) asparagine). The disordered stretch occupies residues 243–278 (AETPTSSPTNKPNNSTTSKAPKGAPKPGKLKKKKKK). The segment covering 245–259 (TPTSSPTNKPNNSTT) has biased composition (polar residues). An N-linked (GlcNAc...) asparagine glycan is attached at Asn-256. A compositionally biased stretch (low complexity) spans 260-269 (SKAPKGAPKP). A helical transmembrane segment spans residues 285–305 (AAWILGFVVGAIGGTISGFVF). Residues 306–641 (SVLFKLIIQA…VRTMLSQIKH (336 aa)) are Cytoplasmic-facing. The Protein kinase domain maps to 347–641 (LASLEIIGRG…VRTMLSQIKH (295 aa)). ATP is bound by residues 353–361 (IGRGGCGEV) and Lys-377. The active-site Proton acceptor is the Asp-489.

This sequence belongs to the protein kinase superfamily. Ser/Thr protein kinase family. As to quaternary structure, interacts with CST. Interacts with RLP23. Component of a trimeric complex composed of RLP23, SOBIR1 and BAK1. BAK1 is recruited into a pre-formed RLP23-SOBIR1 complex in a ligand-dependent manner. Post-translationally, autophosphorylated on Ser, Thr and Tyr residues. As to expression, mostly present in leaves and flowers, with increasing expression in older flowers.

It localises to the cell membrane. It catalyses the reaction L-seryl-[protein] + ATP = O-phospho-L-seryl-[protein] + ADP + H(+). It carries out the reaction L-threonyl-[protein] + ATP = O-phospho-L-threonyl-[protein] + ADP + H(+). The catalysed reaction is L-tyrosyl-[protein] + ATP = O-phospho-L-tyrosyl-[protein] + ADP + H(+). Functionally, dual specificity kinase acting on both serine/threonine- and tyrosine-containing substrates. Acting as a counterplayer of BIR1, promotes the activation of plant defense and cell death. Component of the RLP23-SOBIR1-BAK1 complex that mediates NLP-triggered immunity. Functions as an inhibitor/regulator of abscission, probably by regulating membrane trafficking during abscission. In Arabidopsis thaliana (Mouse-ear cress), this protein is Leucine-rich repeat receptor-like serine/threonine/tyrosine-protein kinase SOBIR1 (SOBIR1).